The following is an 809-amino-acid chain: LPS-assembly protein LptD (809 aa).

The N-terminal stretch at 1–22 is a signal peptide; it reads MRRALRLLPLPLSIAICLPAMA.

This sequence belongs to the LptD family. In terms of assembly, component of the lipopolysaccharide transport and assembly complex. Interacts with LptE and LptA.

The protein localises to the cell outer membrane. Functionally, together with LptE, is involved in the assembly of lipopolysaccharide (LPS) at the surface of the outer membrane. This chain is LPS-assembly protein LptD, found in Xanthomonas euvesicatoria pv. vesicatoria (strain 85-10) (Xanthomonas campestris pv. vesicatoria).